A 747-amino-acid chain; its full sequence is Protein O-mannosyl-transferase 1 (747 aa).

The next 7 membrane-spanning stretches (helical) occupy residues 30–50, 90–110, 121–141, 176–196, 205–225, 228–248, and 267–287; these read PLVV…LGLL, FGHM…NFLW, VPVW…VPMA, LLES…LKFF, SVHW…AVGI, MGIF…WHLI, and VALL…HLML. 3 MIR domains span residues 318–381, 392–449, and 453–513; these read PLEV…VKDP, PRPV…LDIV, and SNQD…VEEH. N-linked (GlcNAc...) asparagine glycosylation is found at N435, N471, and N539. 3 consecutive transmembrane segments (helical) span residues 597–617, 636–656, and 660–680; these read IVIW…FFWY, WVLA…PFFL, and MLFL…LPIV.

It belongs to the glycosyltransferase 39 family.

The protein localises to the endoplasmic reticulum membrane. It catalyses the reaction a di-trans,poly-cis-dolichyl beta-D-mannosyl phosphate + L-seryl-[protein] = 3-O-(alpha-D-mannosyl)-L-seryl-[protein] + a di-trans,poly-cis-dolichyl phosphate + H(+). The catalysed reaction is a di-trans,poly-cis-dolichyl beta-D-mannosyl phosphate + L-threonyl-[protein] = 3-O-(alpha-D-mannosyl)-L-threonyl-[protein] + a di-trans,poly-cis-dolichyl phosphate + H(+). It participates in protein modification; protein glycosylation. Transfers mannosyl residues to the hydroxyl group of serine or threonine residues. Coexpression of both POMT1 and POMT2 is necessary for enzyme activity, expression of either POMT1 or POMT2 alone is insufficient. Essentially dedicated to O-mannosylation of alpha-DAG1 and few other proteins but not of cadherins and protocaherins. The polypeptide is Protein O-mannosyl-transferase 1 (Pomt1) (Rattus norvegicus (Rat)).